The sequence spans 280 residues: MSNPESLKKQVEPPGYNELFMVEDVCNVDLEQGLDLCKPEKVNKQSQRSRQSRQSLFTNTIKPQKDKMNIKTNKIKEFLNDLFTEFSKFHNSYYPDGRISTRSNFRWPLLIIWSIIIVFAVDKKFEVQKFLSIWINENRFYSEIWVPIAIYVCLLVLMLLSLIFFAEFAVLALRVTGVIIAVLGAVLGMIIAVLGMIIAALGMIIAALGATITGLLYFGHWALYKLVILSLGFKIVTPGDVCVSNTLPTHNGETALHSETTVGSDIEQIELQNMPTPVKK.

The next 4 membrane-spanning stretches (helical) occupy residues 107-127 (WPLLIIWSIIIVFAVDKKFEV), 144-164 (IWVPIAIYVCLLVLMLLSLIF), 178-198 (VIIAVLGAVLGMIIAVLGMII), and 199-219 (AALGMIIAALGATITGLLYFG).

The protein belongs to the UPF0494 family.

It localises to the membrane. The sequence is that of UPF0494 membrane protein SPAC212.01c from Schizosaccharomyces pombe (strain 972 / ATCC 24843) (Fission yeast).